A 990-amino-acid polypeptide reads, in one-letter code: Envelope glycoprotein gp160 (990 aa).

An N-terminal signal peptide occupies residues 1–107 (MASSKNMPSR…CLIWEMGKKH (107 aa)). The Extracellular portion of the chain corresponds to 108–838 (SCNAEEVIAL…WSGWFSWLKY (731 aa)). Asn141, Asn162, Asn207, Asn259, Asn299, Asn363, Asn386, Asn402, Asn413, Asn434, Asn438, Asn469, Asn474, Asn480, Asn490, Asn500, Asn514, Asn526, Asn536, Asn542, Asn550, Asn560, and Asn567 each carry an N-linked (GlcNAc...) asparagine; by host glycan. Residues 663–683 (GIGLVIVLAIMAIIAAAGAGL) are fusion peptide. Positions 695–745 (RTAVQSLANATAAQQNVLEATYAMVQHVAKGVRILEARVARVEAIVDRMML) form a coiled coil. Asn703 carries N-linked (GlcNAc...) asparagine; by host glycosylation. Positions 729–745 (LEARVARVEAIVDRMML) are immunosuppression. Residues Asn771, Asn778, and Asn794 are each glycosylated (N-linked (GlcNAc...) asparagine; by host). Residues 786 to 821 (EEIEQHEANLSLLLKEAALQVQIAQRDAQRIPDVWK) adopt a coiled-coil conformation. A helical transmembrane segment spans residues 839–859 (IPWIVVCIVGVICFRLLMCVI). The Cytoplasmic segment spans residues 860–990 (TMCLQAYRQV…AIENEYVELS (131 aa)). A lipid anchor (S-palmitoyl cysteine; by host) is attached at Cys862. The disordered stretch occupies residues 890–909 (KQREERDGSSGSENLEHEKR).

The mature envelope protein (Env) consists of a trimer of SU-TM heterodimers attached by noncovalent interactions or by a labile interchain disulfide bond. Specific enzymatic cleavages in vivo yield mature proteins. Envelope glycoproteins are synthesized as an inactive precursor that is N-glycosylated and processed likely by host cell furin or by a furin-like protease in the Golgi to yield the mature SU and TM proteins. The cleavage site between SU and TM requires the minimal sequence [KR]-X-[KR]-R. Post-translationally, the transmembrane protein is palmitoylated.

It localises to the virion membrane. Its subcellular location is the host cell membrane. Its function is as follows. The surface protein (SU) attaches the virus to the host cell by binding to its receptor. This interaction triggers the refolding of the transmembrane protein (TM) and is thought to activate its fusogenic potential by unmasking its fusion peptide. Fusion occurs at the host cell plasma membrane. The transmembrane protein (TM) acts as a class I viral fusion protein. Under the current model, the protein has at least 3 conformational states: pre-fusion native state, pre-hairpin intermediate state, and post-fusion hairpin state. During viral and target cell membrane fusion, the coiled coil regions (heptad repeats) assume a trimer-of-hairpins structure, positioning the fusion peptide in close proximity to the C-terminal region of the ectodomain. The formation of this structure appears to drive apposition and subsequent fusion of viral and target cell membranes. Membranes fusion leads to delivery of the nucleocapsid into the cytoplasm. This is Envelope glycoprotein gp160 (env) from Ovine maedi visna related virus (strain South Africa) (SA-OMVV).